The primary structure comprises 325 residues: NADH-quinone oxidoreductase subunit H (325 aa).

Helical transmembrane passes span 11-31 (ILLTILKAVVILLVVVTCGAF), 81-101 (VIFTLAPMIAFTSLLLAFAIV), 114-134 (IGILFFLMMAGLAVYAVLFAG), 154-174 (LSYEVFLGLSLMGVVAQAGSF), 186-206 (VWNVIPQFFGFITFAIAGVAV), 237-257 (FFVGEYIGIVTISALMVTLFF), 265-285 (LPPFIWFALKTAFFMMMFILI), and 304-324 (ICLPLTLINLLVTAAVILWQA).

This sequence belongs to the complex I subunit 1 family. As to quaternary structure, NDH-1 is composed of 13 different subunits. Subunits NuoA, H, J, K, L, M, N constitute the membrane sector of the complex.

The protein resides in the cell inner membrane. It carries out the reaction a quinone + NADH + 5 H(+)(in) = a quinol + NAD(+) + 4 H(+)(out). NDH-1 shuttles electrons from NADH, via FMN and iron-sulfur (Fe-S) centers, to quinones in the respiratory chain. The immediate electron acceptor for the enzyme in this species is believed to be ubiquinone. Couples the redox reaction to proton translocation (for every two electrons transferred, four hydrogen ions are translocated across the cytoplasmic membrane), and thus conserves the redox energy in a proton gradient. This subunit may bind ubiquinone. In Escherichia fergusonii (strain ATCC 35469 / DSM 13698 / CCUG 18766 / IAM 14443 / JCM 21226 / LMG 7866 / NBRC 102419 / NCTC 12128 / CDC 0568-73), this protein is NADH-quinone oxidoreductase subunit H.